The chain runs to 412 residues: Eukaryotic initiation factor 4A-2 (412 aa).

The residue at position 2 (alanine 2) is an N-acetylalanine. The Q motif signature appears at 39–67 (ESFDAMGLQENLLRGIYAYGFEKPSAIQQ). The 171-residue stretch at 70–240 (IVPFCKGLDV…RKFMSKPVRI (171 aa)) folds into the Helicase ATP-binding domain. 83–90 (AQSGTGKT) provides a ligand contact to ATP. Position 145 is a phosphothreonine (threonine 145). The DEAD box motif lies at 188-191 (DEAD). A Helicase C-terminal domain is found at 251-412 (GIKQFYVNVE…ELPSNVADLL (162 aa)).

It belongs to the DEAD box helicase family. eIF4A subfamily. In terms of assembly, eIF4F is a multi-subunit complex, the composition of which varies with external and internal environmental conditions. It is composed of at least EIF4A, EIF4E and EIF4G. Ubiquitous. Preferentially expressed in flowers, young leaves and roots.

The protein resides in the cytoplasm. It carries out the reaction ATP + H2O = ADP + phosphate + H(+). Its function is as follows. ATP-dependent RNA helicase which is a subunit of the eIF4F complex involved in cap recognition and is required for mRNA binding to ribosome. In the current model of translation initiation, eIF4A unwinds RNA secondary structures in the 5'-UTR of mRNAs which is necessary to allow efficient binding of the small ribosomal subunit, and subsequent scanning for the initiator codon. This is Eukaryotic initiation factor 4A-2 (TIF4A-2) from Arabidopsis thaliana (Mouse-ear cress).